A 335-amino-acid polypeptide reads, in one-letter code: ATP-dependent 6-phosphofructokinase (335 aa).

ATP is bound at residue G11. 21 to 25 (RAVVR) lines the ADP pocket. ATP contacts are provided by residues 72–73 (RY) and 102–105 (GDGS). D103 serves as a coordination point for Mg(2+). 125–127 (TID) is a binding site for substrate. D127 (proton acceptor) is an active-site residue. R154 contacts ADP. Residues R162 and 169–171 (MGR) each bind substrate. ADP contacts are provided by residues 185 to 187 (GAD) and 213 to 215 (KKH). Substrate-binding positions include E222, R244, and 250 to 253 (HIQR).

This sequence belongs to the phosphofructokinase type A (PFKA) family. ATP-dependent PFK group I subfamily. Prokaryotic clade 'B1' sub-subfamily. In terms of assembly, homotetramer. Requires Mg(2+) as cofactor.

It localises to the cytoplasm. It carries out the reaction beta-D-fructose 6-phosphate + ATP = beta-D-fructose 1,6-bisphosphate + ADP + H(+). Its pathway is carbohydrate degradation; glycolysis; D-glyceraldehyde 3-phosphate and glycerone phosphate from D-glucose: step 3/4. Allosterically activated by ADP and other diphosphonucleosides, and allosterically inhibited by phosphoenolpyruvate. Catalyzes the phosphorylation of D-fructose 6-phosphate to fructose 1,6-bisphosphate by ATP, the first committing step of glycolysis. This chain is ATP-dependent 6-phosphofructokinase, found in Streptococcus pneumoniae (strain CGSP14).